The following is a 250-amino-acid chain: Beta-crystallin B1 (250 aa).

Residues 1-13 are compositionally biased toward polar residues; sequence MSQAAKASATTAV. Positions 1–49 are disordered; sequence MSQAAKASATTAVNPGPDGKGKGAPSTGPAPAPGPTPVPASVPRPAAKV. Serine 2 is modified (N-acetylserine). The interval 2–56 is N-terminal arm; sequence SQAAKASATTAVNPGPDGKGKGAPSTGPAPAPGPTPVPASVPRPAAKVGDLPPGS. A compositionally biased stretch (pro residues) spans 28 to 42; it reads GPAPAPGPTPVPASV. 2 Beta/gamma crystallin 'Greek key' domains span residues 57-96 and 97-141; these read YRLI…IVVS and GPWV…RPIR. The segment at 142–146 is connecting peptide; sequence MDSQE. 2 Beta/gamma crystallin 'Greek key' domains span residues 147 to 188 and 189 to 231; these read HKIC…TVSG and GTWV…RRLR. The C-terminal arm stretch occupies residues 233-250; that stretch reads RQWHQEGCFPVLTAEPPK.

This sequence belongs to the beta/gamma-crystallin family. In terms of assembly, homo/heterodimer, or complexes of higher-order. The structure of beta-crystallin oligomers seems to be stabilized through interactions between the N-terminal arms. Post-translationally, specific cleavages in the N-terminal arm occur during lens maturation and give rise to truncated forms, leading to impaired oligomerization and protein insolubilization. The protease responsible for this partial degradation could be calpain II.

Crystallins are the dominant structural components of the vertebrate eye lens. The chain is Beta-crystallin B1 (Crybb1) from Mus musculus (Mouse).